A 324-amino-acid chain; its full sequence is Nucleotide-binding protein GbCGDNIH1_0395 (324 aa).

Residue 14–21 (GLSGAGKS) coordinates ATP. Residue 59-62 (DARS) coordinates GTP. Residues 286 to 324 (ISDDAPQAGAARVSTDDRNGRPEEHGSAQAPDELSRTTS) form a disordered region. Residues 299-311 (STDDRNGRPEEHG) are compositionally biased toward basic and acidic residues.

This sequence belongs to the RapZ-like family.

Displays ATPase and GTPase activities. The polypeptide is Nucleotide-binding protein GbCGDNIH1_0395 (Granulibacter bethesdensis (strain ATCC BAA-1260 / CGDNIH1)).